Here is a 164-residue protein sequence, read N- to C-terminus: HTH-type transcriptional regulator IscR (164 aa).

The region spanning 2–131 is the HTH rrf2-type domain; it reads RLTSKGRYAV…NNITLGELVN (130 aa). Residues 28–51 constitute a DNA-binding region (H-T-H motif); the sequence is LADISERQGISLSYLEQLFSRLRK. 3 residues coordinate [2Fe-2S] cluster: cysteine 92, cysteine 98, and cysteine 104.

It depends on [2Fe-2S] cluster as a cofactor.

In terms of biological role, regulates the transcription of several operons and genes involved in the biogenesis of Fe-S clusters and Fe-S-containing proteins. The protein is HTH-type transcriptional regulator IscR of Salmonella agona (strain SL483).